We begin with the raw amino-acid sequence, 169 residues long: Interleukin-36 gamma (169 aa).

The propeptide occupies 1–17 (MRGTPGDADGGGRAVYQ).

The protein belongs to the IL-1 family. Interacts with cargo receptor TMED10; the interaction mediates the translocation from the cytoplasm into the ERGIC (endoplasmic reticulum-Golgi intermediate compartment) and thereby secretion. In terms of processing, N-terminal truncation leads to a dramatic enhancement of its activity (&gt;1000-fold). Proteolytically cleaved by cathepsin CTSG. Highly expressed in tissues containing epithelial cells: skin, lung, stomach and esophagus. Expressed in bronchial epithelial. In skin is expressed only in keratinocytes but not in fibroblasts, endothelial cells or melanocytes. Up-regulated in lesional psoriasis skin. Expressed in monocyte-derived dendritic cells and M1 macrophages.

The protein resides in the cytoplasm. It is found in the secreted. Its function is as follows. Cytokine that binds to and signals through the IL1RL2/IL-36R receptor which in turn activates NF-kappa-B and MAPK signaling pathways in target cells. Part of the IL-36 signaling system that is thought to be present in epithelial barriers and to take part in local inflammatory response; similar to the IL-1 system with which it shares the coreceptor IL1RAP. Seems to be involved in skin inflammatory response by acting on keratinocytes, dendritic cells and indirectly on T-cells to drive tissue infiltration, cell maturation and cell proliferation. In cultured keratinocytes induces the expression of macrophage, T-cell, and neutrophil chemokines, such as CCL3, CCL4, CCL5, CCL2, CCL17, CCL22, CL20, CCL5, CCL2, CCL17, CCL22, CXCL8, CCL20 and CXCL1; also stimulates its own expression and that of the prototypic cutaneous pro-inflammatory parameters TNF-alpha, S100A7/psoriasin and inducible NOS. May play a role in pro-inflammatory responses during particular neutrophilic airway inflammation: activates mitogen-activated protein kinases and NF-kappa B in primary lung fibroblasts, and stimulates the expression of IL-8 and CXCL3 and Th17 chemokine CCL20 in lung fibroblasts. May be involved in the innate immune response to fungal pathogens, such as Aspergillus fumigatus. This chain is Interleukin-36 gamma, found in Homo sapiens (Human).